A 124-amino-acid polypeptide reads, in one-letter code: Small ribosomal subunit protein uS12 (124 aa).

Residues 1–28 (MPTINQLVRKGRTPKVSKTKAPALKGSP) form a disordered region. Residues 9 to 18 (RKGRTPKVSK) show a composition bias toward basic residues. Asp89 is subject to 3-methylthioaspartic acid.

This sequence belongs to the universal ribosomal protein uS12 family. In terms of assembly, part of the 30S ribosomal subunit. Contacts proteins S8 and S17. May interact with IF1 in the 30S initiation complex.

Its function is as follows. With S4 and S5 plays an important role in translational accuracy. Functionally, interacts with and stabilizes bases of the 16S rRNA that are involved in tRNA selection in the A site and with the mRNA backbone. Located at the interface of the 30S and 50S subunits, it traverses the body of the 30S subunit contacting proteins on the other side and probably holding the rRNA structure together. The combined cluster of proteins S8, S12 and S17 appears to hold together the shoulder and platform of the 30S subunit. This is Small ribosomal subunit protein uS12 from Paenarthrobacter aurescens (strain TC1).